The sequence spans 291 residues: Ribose-phosphate pyrophosphokinase (291 aa).

Residues 34–36 (DGE) and 93–94 (RQ) each bind ATP. Mg(2+) contacts are provided by H127 and D165. K188 is an active-site residue. Residues R190, D216, and 220-224 (STGGT) each bind D-ribose 5-phosphate.

Belongs to the ribose-phosphate pyrophosphokinase family. Class III (archaeal) subfamily. As to quaternary structure, homodimer. Mg(2+) is required as a cofactor.

It is found in the cytoplasm. It catalyses the reaction D-ribose 5-phosphate + ATP = 5-phospho-alpha-D-ribose 1-diphosphate + AMP + H(+). It participates in metabolic intermediate biosynthesis; 5-phospho-alpha-D-ribose 1-diphosphate biosynthesis; 5-phospho-alpha-D-ribose 1-diphosphate from D-ribose 5-phosphate (route I): step 1/1. Involved in the biosynthesis of the central metabolite phospho-alpha-D-ribosyl-1-pyrophosphate (PRPP) via the transfer of pyrophosphoryl group from ATP to 1-hydroxyl of ribose-5-phosphate (Rib-5-P). The polypeptide is Ribose-phosphate pyrophosphokinase (Saccharolobus solfataricus (strain ATCC 35092 / DSM 1617 / JCM 11322 / P2) (Sulfolobus solfataricus)).